The primary structure comprises 444 residues: Prenyltransferase phnF (444 aa).

Belongs to the tryptophan dimethylallyltransferase family.

The catalysed reaction is 2,3,4,7,9-pentahydroxy-6-methyl-1H-phenalen-1-one + dimethylallyl diphosphate = 2,4,7,9-tetrahydroxy-6-methyl-8-(2-methylbut-3-en-2-yl)-1-oxo-1H-phenalen-3-ol + diphosphate. Its pathway is secondary metabolite biosynthesis. Prenyltransferase; part of the gene cluster that mediates the biosynthesis of phenalenones such as herqueinone, compounds that have been reported to treat tumors, bacterial infections and/or mycoses, and rheumatic diseases. The non-reducing polyketide synthase phnA synthesizes the heptaketide backbone and cyclizes it into the angular, hemiketal-containing naphtho-gamma-pyrone prephenalenone. The product template (PT) domain of phnA catalyzes only the C4-C9 aldol condensation, which is unprecedented among known PT domains. The transformation of prephenalenone to phenalenones requires an FAD-dependent monooxygenase phnB, which catalyzes the C2 aromatic hydroxylation of prephenalenone and ring opening of the gamma-pyrone ring simultaneously. Subsequent intramolecular deprotonation of C3 phenolic oxygen accelerates phenalenone ring closure to yield the tricyclic phenalenone core with a C2 hydroxylation. The prenyltransferase phnF further catalyzes reverse C-prenylation of phenalenone by direct electrophilic substitution at C6, or possibly via first a forward O-prenylation of a neighboring phenol in phenalenone, followed by a Claisen rearrangement. The hydroalkoxylation enzyme phnH catalyzes the 5-exo-trig cyclization via acid catalysis after the spontaneous deprotonation of 7-OH, which leads to the formation of the dihydrobenzofuran atrovenetin. Atrovenetin is further converted to deoxyherqueinone by the O-methyltransferase phnC which can methylate C2-OH to stabilize the northern portion of the phenalenone core. Finally, the oxidoreductase phnG converts deoxyherqueinone to herqueinone via C6 hydroxylation. This Penicillium herquei protein is Prenyltransferase phnF.